We begin with the raw amino-acid sequence, 507 residues long: Hippocampus abundant transcript-like protein 1 (507 aa).

Residues 1-27 (MSTDGESPEEPRWKAVASPKASTMPEK) are disordered. The Extracellular segment spans residues 1–51 (MSTDGESPEEPRWKAVASPKASTMPEKRGSAQAASGSWLQGFGHPSVYHAA). The helical transmembrane segment at 52-72 (FVIFLEFFAWGLLTTPMLTVL) threads the bilayer. The Cytoplasmic segment spans residues 73-84 (HETFPQHTFLMN). A helical membrane pass occupies residues 85–105 (GLIQGVKGLLSFLSAPLIGAL). The Extracellular segment spans residues 106–113 (SDVWGRKP). A helical transmembrane segment spans residues 114-134 (FLLGTVFFTCFPIPLMRINPW). Residues 135–136 (WY) are Cytoplasmic-facing. A helical transmembrane segment spans residues 137–157 (FGMISVSGVFSVTFSVIFAYV). The Extracellular portion of the chain corresponds to 158–170 (ADFTQEHERSTAY). A helical membrane pass occupies residues 171–191 (GWVSATFAASLVSSPAIGTYL). Residues 192 to 198 (SANYGDS) are Cytoplasmic-facing. A helical transmembrane segment spans residues 199 to 219 (LVVLVATLVALLDICFILIAV). At 220–257 (PESLSEKIRPASWGAQISWKQADPFASLKKVGKDSTVL) the chain is on the extracellular side. A helical membrane pass occupies residues 258–278 (LICITVFLSYLPEAGQYSSFF). Residues 279–283 (LYLRQ) are Cytoplasmic-facing. The helical transmembrane segment at 284–304 (VIGFGSVKIVAFIAMVGILSI) threads the bilayer. The Extracellular segment spans residues 305–323 (VAQTVFLSKLMRSLGNKNT). A helical membrane pass occupies residues 324–344 (VLLGLGFQMLQLAWYGFGSQA). Residues 345–347 (WMM) are Cytoplasmic-facing. The chain crosses the membrane as a helical span at residues 348-368 (WAAGTVAAMSSITFPAVSALI). Over 369–389 (SRNAESDQQGVAQGIVTGIRG) the chain is Extracellular. A helical transmembrane segment spans residues 390–410 (LCNGLGPALYGFIFYMFHVEL). Over 411–430 (SELGPKLNSDDDPLQGAFIP) the chain is Cytoplasmic. Residues 431–451 (GPPFLFGACIVLMSFLVALFI) traverse the membrane as a helical segment. Residues 452-507 (PEYRKTSGVQKHNNSTSGSLSTPPERGSDEDIEPLLQDSSIWELSFEEPGNQCTEL) lie on the Extracellular side of the membrane. Over residues 459 to 473 (GVQKHNNSTSGSLST) the composition is skewed to polar residues. The tract at residues 459 to 483 (GVQKHNNSTSGSLSTPPERGSDEDI) is disordered. N-linked (GlcNAc...) asparagine glycosylation is found at Asn-464 and Asn-465.

The protein belongs to the major facilitator superfamily.

It is found in the membrane. The sequence is that of Hippocampus abundant transcript-like protein 1 from Mus musculus (Mouse).